The sequence spans 476 residues: Nyctalopin (476 aa).

An N-terminal signal peptide occupies residues Met-1–Ala-18. 11 LRR repeats span residues Val-60 to Arg-84, Arg-85 to Ala-108, Leu-110 to Arg-133, Arg-134 to Arg-157, Leu-159 to His-181, Ala-182 to Arg-204, Ser-205 to Glu-228, His-229 to Arg-252, Leu-254 to Glu-276, Leu-277 to Leu-300, and Leu-302 to Gly-324. The N-linked (GlcNAc...) asparagine glycan is linked to Asn-92. N-linked (GlcNAc...) asparagine glycosylation occurs at Asn-178. An N-linked (GlcNAc...) asparagine glycan is attached at Asn-295. Positions Asp-336–Leu-387 constitute an LRRCT domain. N-linked (GlcNAc...) asparagine glycans are attached at residues Asn-388, Asn-427, and Asn-434.

Belongs to the small leucine-rich proteoglycan (SLRP) family. SLRP class IV subfamily. Expressed in kidney and retina. Also at low levels in brain, testis and muscle. Within the retina, expressed in the inner segment of photoreceptors, outer and inner nuclear layers and the ganglion cell layer.

Its subcellular location is the secreted. It localises to the extracellular space. The protein resides in the extracellular matrix. This Homo sapiens (Human) protein is Nyctalopin (NYX).